The following is a 448-amino-acid chain: Pentatricopeptide repeat-containing protein At1g80550, mitochondrial (448 aa).

A mitochondrion-targeting transit peptide spans 1–21; it reads MLLLRRLNRVRIASPYSVRLL. 10 PPR repeats span residues 80–110, 116–146, 150–186, 188–222, 223–257, 258–292, 293–327, 331–359, 360–394, and 395–429; these read TTETFNRVIDILGKYFEFEISWALINRMIGN, NHVTFRIVFKRYVTAHLVQEAIDAYDKLDDF, DETSFYNLVDALCEHKHVVEAEELCFGKNVIGNGFSV, NTKIHNLILRGWSKLGWWGKCKEYWKKMDTEGVTK, DLFSYSIYMDIMCKSGKPWKAVKLYKEMKSRRMKL, DVVAYNTVIRAIGASQGVEFGIRVFREMRERGCEP, NVATHNTIIKLLCEDGRMRDAYRMLDEMPKRGCQP, TYMCLFSRLEKPSEILSLFGRMIRSGVRP, KMDTYVMLMRKFERWGFLQPVLYVWKTMKESGDTP, and DSAAYNAVIDALIQKGMLDMAREYEEEMIERGLSP.

This sequence belongs to the PPR family. P subfamily.

Its subcellular location is the mitochondrion. In Arabidopsis thaliana (Mouse-ear cress), this protein is Pentatricopeptide repeat-containing protein At1g80550, mitochondrial.